The following is a 201-amino-acid chain: 3-isopropylmalate dehydratase small subunit (201 aa).

This sequence belongs to the LeuD family. LeuD type 1 subfamily. In terms of assembly, heterodimer of LeuC and LeuD.

The enzyme catalyses (2R,3S)-3-isopropylmalate = (2S)-2-isopropylmalate. Its pathway is amino-acid biosynthesis; L-leucine biosynthesis; L-leucine from 3-methyl-2-oxobutanoate: step 2/4. Catalyzes the isomerization between 2-isopropylmalate and 3-isopropylmalate, via the formation of 2-isopropylmaleate. The protein is 3-isopropylmalate dehydratase small subunit of Dinoroseobacter shibae (strain DSM 16493 / NCIMB 14021 / DFL 12).